The primary structure comprises 218 residues: Small ribosomal subunit protein uS3 (218 aa).

The KH type-2 domain maps to 38–106 (IRKFIATKLA…RVHINIVEIK (69 aa)).

This sequence belongs to the universal ribosomal protein uS3 family. Part of the 30S ribosomal subunit. Forms a tight complex with proteins S10 and S14.

Its function is as follows. Binds the lower part of the 30S subunit head. Binds mRNA in the 70S ribosome, positioning it for translation. This is Small ribosomal subunit protein uS3 from Enterococcus faecalis (strain ATCC 700802 / V583).